Reading from the N-terminus, the 301-residue chain is tRNA pseudouridine synthase B (301 aa).

Residue D47 is the Nucleophile of the active site.

This sequence belongs to the pseudouridine synthase TruB family. Type 1 subfamily.

The enzyme catalyses uridine(55) in tRNA = pseudouridine(55) in tRNA. Its function is as follows. Responsible for synthesis of pseudouridine from uracil-55 in the psi GC loop of transfer RNAs. This chain is tRNA pseudouridine synthase B, found in Cereibacter sphaeroides (strain ATCC 17023 / DSM 158 / JCM 6121 / CCUG 31486 / LMG 2827 / NBRC 12203 / NCIMB 8253 / ATH 2.4.1.) (Rhodobacter sphaeroides).